Consider the following 321-residue polypeptide: uncharacterized protein (321 aa).

The active-site Proton donor is Tyr-49. Residue His-106 coordinates substrate.

Belongs to the aldo/keto reductase family.

This is an uncharacterized protein from Caenorhabditis elegans.